The sequence spans 171 residues: Deoxyuridine 5'-triphosphate nucleotidohydrolase (171 aa).

Glu143 is a binding site for Mg(2+).

This sequence belongs to the dUTPase family. In terms of assembly, homotrimer. Requires Mg(2+) as cofactor.

The enzyme catalyses dUTP + H2O = dUMP + diphosphate + H(+). It functions in the pathway pyrimidine metabolism; dUMP biosynthesis; dUMP from dCTP (dUTP route): step 2/2. Its function is as follows. This enzyme is involved in nucleotide metabolism: it produces dUMP, the immediate precursor of thymidine nucleotides and it decreases the intracellular concentration of dUTP, preventing uracil incorporation into DNA. The sequence is that of Deoxyuridine 5'-triphosphate nucleotidohydrolase (DUT) from Oryza sativa subsp. japonica (Rice).